A 423-amino-acid polypeptide reads, in one-letter code: Mannose-6-phosphate isomerase (423 aa).

Alanine 2 bears the N-acetylalanine mark. 2 positions are modified to phosphoserine: serine 102 and serine 108. Zn(2+)-binding residues include glutamine 110, histidine 112, glutamate 137, and histidine 276. Arginine 295 is an active-site residue.

It belongs to the mannose-6-phosphate isomerase type 1 family. It depends on Zn(2+) as a cofactor. As to expression, expressed in all tissues, but more abundant in heart, brain and skeletal muscle.

It localises to the cytoplasm. It catalyses the reaction D-mannose 6-phosphate = D-fructose 6-phosphate. Its pathway is nucleotide-sugar biosynthesis; GDP-alpha-D-mannose biosynthesis; alpha-D-mannose 1-phosphate from D-fructose 6-phosphate: step 1/2. Functionally, isomerase that catalyzes the interconversion of fructose-6-P and mannose-6-P and has a critical role in the supply of D-mannose derivatives required for many eukaryotic glycosylation reactions. The protein is Mannose-6-phosphate isomerase of Homo sapiens (Human).